A 605-amino-acid polypeptide reads, in one-letter code: Golgi-associated RAB2 interactor protein 3 (605 aa).

Disordered regions lie at residues 234-265 and 407-529; these read GEGI…AART and YMSE…ALQK. Positions 239-265 are enriched in low complexity; that stretch reads HASHGTASAASPSTSTPGAAEGGAART. Basic residues predominate over residues 434–457; the sequence is KKDRHPSRKSSHHRKAGESHRRRA. The short motif at 441-458 is the Bipartite nuclear localization signal element; that stretch reads RKSSHHRKAGESHRRRAG. Over residues 463-473 the composition is skewed to polar residues; that stretch reads KASSHRSASGH. A compositionally biased stretch (basic and acidic residues) spans 475–484; it reads NTRDDKKEKG. The segment covering 489-500 has biased composition (basic residues); the sequence is RGKRHGSSRKSS. Residues 513 to 526 show a composition bias toward polar residues; it reads QELGKNQSASSTGA. Serine 592 carries the phosphoserine modification.

This sequence belongs to the GARIN family. Interacts (via N-terminus) with RAB2B (in GTP-bound form). Interacts with FRG1. As to expression, expressed in adult spermatocytes and spermatids (at protein level).

It localises to the golgi apparatus. It is found in the nucleus. Its subcellular location is the cajal body. Functionally, may be involved in RNA biogenesis. The sequence is that of Golgi-associated RAB2 interactor protein 3 from Homo sapiens (Human).